Reading from the N-terminus, the 212-residue chain is High frequency lysogenization protein HflD homolog (212 aa).

The protein belongs to the HflD family.

It is found in the cytoplasm. Its subcellular location is the cell inner membrane. This is High frequency lysogenization protein HflD homolog from Stutzerimonas stutzeri (strain A1501) (Pseudomonas stutzeri).